The primary structure comprises 291 residues: Formamidopyrimidine-DNA glycosylase (291 aa).

Pro-2 (schiff-base intermediate with DNA) is an active-site residue. Glu-3 functions as the Proton donor in the catalytic mechanism. The Proton donor; for beta-elimination activity role is filled by Lys-60. Positions 108 and 127 each coordinate DNA. The segment at 257 to 291 adopts an FPG-type zinc-finger fold; that stretch reads WVYRRGGQACRICSTPIRRESLCGRGTHWCPNCQR. Arg-281 (proton donor; for delta-elimination activity) is an active-site residue.

This sequence belongs to the FPG family. In terms of assembly, monomer. Zn(2+) serves as cofactor.

It catalyses the reaction Hydrolysis of DNA containing ring-opened 7-methylguanine residues, releasing 2,6-diamino-4-hydroxy-5-(N-methyl)formamidopyrimidine.. It carries out the reaction 2'-deoxyribonucleotide-(2'-deoxyribose 5'-phosphate)-2'-deoxyribonucleotide-DNA = a 3'-end 2'-deoxyribonucleotide-(2,3-dehydro-2,3-deoxyribose 5'-phosphate)-DNA + a 5'-end 5'-phospho-2'-deoxyribonucleoside-DNA + H(+). Functionally, involved in base excision repair of DNA damaged by oxidation or by mutagenic agents. Acts as a DNA glycosylase that recognizes and removes damaged bases. Has a preference for oxidized purines, such as 7,8-dihydro-8-oxoguanine (8-oxoG). Has AP (apurinic/apyrimidinic) lyase activity and introduces nicks in the DNA strand. Cleaves the DNA backbone by beta-delta elimination to generate a single-strand break at the site of the removed base with both 3'- and 5'-phosphates. This chain is Formamidopyrimidine-DNA glycosylase, found in Prochlorococcus marinus (strain MIT 9313).